A 302-amino-acid chain; its full sequence is MDQQRLTHLRQLEAESIHIIREVAAEFANPVMMYSIGKDSSVMLHLARKAFYPGTLPFPLLHVDTGWKFREMYEFRDRMVKNIGAELLVHRNPEGLAMGINPFVHGSAKHTDIMKTEGLKQALDKYGFDAAFGGARRDEEKSRAKERIYSFRDRFHRWDPKNQRPELWHNYNGQVNKGESIRVFPLSNWTELDIWQYIFLENIEIVPLYLAAPRPVLERDGMLMMIDDDRINLQPGEVIEQRMVRFRTLGCWPLTGAVESEAQTLPGIIEEMLVSTTSERQGRMIDRDQAGSMELKKRQGYF.

Belongs to the PAPS reductase family. CysD subfamily. As to quaternary structure, heterodimer composed of CysD, the smaller subunit, and CysN.

It catalyses the reaction sulfate + ATP + H(+) = adenosine 5'-phosphosulfate + diphosphate. The protein operates within sulfur metabolism; hydrogen sulfide biosynthesis; sulfite from sulfate: step 1/3. In terms of biological role, with CysN forms the ATP sulfurylase (ATPS) that catalyzes the adenylation of sulfate producing adenosine 5'-phosphosulfate (APS) and diphosphate, the first enzymatic step in sulfur assimilation pathway. APS synthesis involves the formation of a high-energy phosphoric-sulfuric acid anhydride bond driven by GTP hydrolysis by CysN coupled to ATP hydrolysis by CysD. The sequence is that of Sulfate adenylyltransferase subunit 2 from Erwinia tasmaniensis (strain DSM 17950 / CFBP 7177 / CIP 109463 / NCPPB 4357 / Et1/99).